The following is a 751-amino-acid chain: MALQPVPRMRRTLQNTQHTYSLGRRIYDVKTYPVQSPQGATILIYGHENGATVVWRGGRRLKPPKPQTNEKRNGTKPEDAVMIIDSDDETGPTFVDKPEFEDSPSVADGSVAEIIQTLDLALGTAVNHIAVLPMPPCAAEDASWNGANILKTKIVFAVTCATNDVYVITLPLTPPSHEAKARPELRKSLLAGNAGKGVWGETLTLLTGPSRSCNGVAISLVKHRSSSRSRSSERSAAQAAPITRVVVAAHSREASGTLRLWDVPLEAKPGTINRVEPFQTEYLPSPLTSISFNPVNLTQLLTVASPHAVRIYDYATASLPSDDTSEGPFPSQGSWLISLYPPFARGPAMSTSRKPIVAAEWIARGRAILTLLADGQWGIWDLDGASPTAAGGGSNLFSKTSAGLRGTAITAFSVTGHLEGTSPLRNPTTQKASSSSSGEFVPMTPHTRRDAIATAFGGSPEKLAAVRGGITVAQLPSTLTSGAGDESAVLFLGGADPIVCVIPVLSKFWDSQLRRAAGGGVNLWSGAQPTRMIRLTDLSAGLLGERCTGAVAITKAVRANASTNGILKEDDNSGSQGLPIEVLLQGESRLVIVHENGDAPTSSLTSRLLGARKKQRDEFKSVNAIVAYPPLEKPSVSFNLNLTQRPEKPGTLFAPRSRHSKSLFEQSIDTIPSTDAGDEETIPATSAPSSQQGFMFATDLELAADLPDDEADAEGRDVEQELLDIMEIDRELEQLEQARERGRKRVFFEEG.

The stretch at 21–65 is one WD 1 repeat; it reads SLGRRIYDVKTYPVQSPQGATILIYGHENGATVVWRGGRRLKPPK. The tract at residues 57 to 77 is disordered; that stretch reads GGRRLKPPKPQTNEKRNGTKP. Positions 68 to 77 are enriched in basic and acidic residues; the sequence is TNEKRNGTKP. WD repeat units follow at residues 162-209, 237-271, 282-322, and 351-390; these read TNDV…LTGP, AQAAPITRVVVAAHSREASGTLRLWDVPLEAKPGT, YLPS…LPSD, and TSRKPIVAAEWIARGRAILTLLADGQWGIWDLDGASPTAA. The interval 419–443 is disordered; that stretch reads EGTSPLRNPTTQKASSSSSGEFVPM. Polar residues predominate over residues 423–438; the sequence is PLRNPTTQKASSSSSG. WD repeat units follow at residues 455–492 and 494–534; these read AFGGSPEKLAAVRGGITVAQLPSTLTSGAGDESAVLFL and GADP…RMIR. Residues 671 to 692 are disordered; sequence IPSTDAGDEETIPATSAPSSQQ. Over residues 683–692 the composition is skewed to polar residues; sequence PATSAPSSQQ. Residues 716 to 750 adopt a coiled-coil conformation; it reads RDVEQELLDIMEIDRELEQLEQARERGRKRVFFEE.

The nuclear pore complex (NPC) constitutes the exclusive means of nucleocytoplasmic transport. NPCs allow the passive diffusion of ions and small molecules and the active, nuclear transport receptor-mediated bidirectional transport of macromolecules such as proteins, RNAs, ribonucleoparticles (RNPs), and ribosomal subunits across the nuclear envelope. The 55-60 MDa NPC is composed of at least 28 different subunits: AMO1, ELYS, GLE1, GLE2, MLP1, NDC1, NIC96, NSP1, NUP133, NUP145, NUP152, NUP159, NUP170, NUP188, NUP192, NUP37, NUP49, NUP53, NUP56, NUP57, NUP82, NUP84, NUP85, POM152, POM33, POM34, SEC13 and SEH1. Due to its 8-fold rotational symmetry, all subunits are present with 8 copies or multiples thereof.

The protein localises to the nucleus. Its subcellular location is the nuclear pore complex. This Chaetomium thermophilum (strain DSM 1495 / CBS 144.50 / IMI 039719) (Thermochaetoides thermophila) protein is Nucleoporin NUP37 (NUP37).